The sequence spans 661 residues: Translation factor GUF1 homolog, mitochondrial (661 aa).

The tr-type G domain occupies 59-242 (ENIRNFCIVA…AIIDRIPSPK (184 aa)). Residues 68–75 (AHVDHGKS), 135–139 (DTPGH), and 189–192 (NKVD) contribute to the GTP site.

The protein belongs to the TRAFAC class translation factor GTPase superfamily. Classic translation factor GTPase family. LepA subfamily.

The protein resides in the mitochondrion inner membrane. It carries out the reaction GTP + H2O = GDP + phosphate + H(+). Promotes mitochondrial protein synthesis. May act as a fidelity factor of the translation reaction, by catalyzing a one-codon backward translocation of tRNAs on improperly translocated ribosomes. Binds to mitochondrial ribosomes in a GTP-dependent manner. The polypeptide is Translation factor GUF1 homolog, mitochondrial (Ixodes scapularis (Black-legged tick)).